The sequence spans 209 residues: Na(+)-translocating NADH-quinone reductase subunit D (209 aa).

A run of 5 helical transmembrane segments spans residues 42–62 (LVMT…ISLI), 72–92 (IIVQ…ILQA), 103–123 (VFVG…AYAM), 131–151 (FMDG…VGFL), and 178–198 (NGLF…IWGL).

It belongs to the NqrDE/RnfAE family. As to quaternary structure, composed of six subunits; NqrA, NqrB, NqrC, NqrD, NqrE and NqrF.

It is found in the cell inner membrane. It catalyses the reaction a ubiquinone + n Na(+)(in) + NADH + H(+) = a ubiquinol + n Na(+)(out) + NAD(+). In terms of biological role, NQR complex catalyzes the reduction of ubiquinone-1 to ubiquinol by two successive reactions, coupled with the transport of Na(+) ions from the cytoplasm to the periplasm. NqrA to NqrE are probably involved in the second step, the conversion of ubisemiquinone to ubiquinol. This is Na(+)-translocating NADH-quinone reductase subunit D from Photorhabdus laumondii subsp. laumondii (strain DSM 15139 / CIP 105565 / TT01) (Photorhabdus luminescens subsp. laumondii).